A 600-amino-acid chain; its full sequence is UDP-sugar pyrophospharylase (600 aa).

The protein belongs to the USP family. It depends on Mg(2+) as a cofactor. The cofactor is Mn(2+). In terms of processing, the N-terminus is blocked.

It catalyses the reaction a monosaccharide 1-phosphate + UTP + H(+) = a UDP-monosaccharide + diphosphate. With respect to regulation, inhibited by a high concentration of pyrophosphate. Functionally, may function as the terminal enzyme of the myo-inositol oxidation (MIO) pathway. May also play a role in the salvage pathway for synthesis of nucleotide sugars. The chain is UDP-sugar pyrophospharylase (USP) from Pisum sativum (Garden pea).